The following is a 144-amino-acid chain: Maximins 3/H9 type 2 (144 aa).

Positions 1–18 are cleaved as a signal peptide; the sequence is MNFKYIVAVSFLIASAYA. 2 consecutive propeptides follow at residues 19–43 and 74–123; these read RSVQNDEQSLSQRDVLEEESLREIR and TAEE…KEKR. Isoleucine amide is present on isoleucine 143.

The protein belongs to the bombinin family. In terms of tissue distribution, expressed by the skin glands.

Its subcellular location is the secreted. In terms of biological role, maximin-3 shows antibacterial activity against both Gram-positive and Gram-negative bacteria. It also shows antimicrobial activity against the fungus C.albicans, but not against A.flavus nor P.uticale. It has little hemolytic activity. It possess a significant cytotoxicity against tumor cell lines. It possess a significant anti-HIV activity. It shows high spermicidal activity. Its function is as follows. Maximin-H9 shows antimicrobial activity against bacteria and against the fungus C.albicans. Shows strong hemolytic activity. This chain is Maximins 3/H9 type 2, found in Bombina maxima (Giant fire-bellied toad).